The following is a 423-amino-acid chain: Histidine--tRNA ligase (423 aa).

It belongs to the class-II aminoacyl-tRNA synthetase family. As to quaternary structure, homodimer.

The protein localises to the cytoplasm. It carries out the reaction tRNA(His) + L-histidine + ATP = L-histidyl-tRNA(His) + AMP + diphosphate + H(+). In Moorella thermoacetica (strain ATCC 39073 / JCM 9320), this protein is Histidine--tRNA ligase.